The following is a 225-amino-acid chain: Ribosomal RNA small subunit methyltransferase G (225 aa).

Residues glycine 84, phenylalanine 89, 107–109 (DST), 135–136 (AE), and arginine 154 contribute to the S-adenosyl-L-methionine site.

It belongs to the methyltransferase superfamily. RNA methyltransferase RsmG family.

Its subcellular location is the cytoplasm. Specifically methylates the N7 position of a guanine in 16S rRNA. In Microcystis aeruginosa (strain NIES-843 / IAM M-2473), this protein is Ribosomal RNA small subunit methyltransferase G.